Here is a 298-residue protein sequence, read N- to C-terminus: Putative F-box and FNIP repeat-containing protein R286 (298 aa).

One can recognise an F-box domain in the interval 4–48 (LNVLESHVILHIIEFLPDHEKIKFMSTCKSLYEFRCHVTYNNFYV). FNIP repeat units follow at residues 124–165 (FNKP…LGHN) and 255–297 (WNFD…FISR).

This is Putative F-box and FNIP repeat-containing protein R286 from Acanthamoeba polyphaga (Amoeba).